The following is a 307-amino-acid chain: Mycothiol acetyltransferase (307 aa).

2 N-acetyltransferase domains span residues His15 to Pro158 and Val164 to Ser307. Glu46 is a 1D-myo-inositol 2-(L-cysteinylamino)-2-deoxy-alpha-D-glucopyranoside binding site. Residue Leu90–Val92 coordinates acetyl-CoA. Glu191, Lys230, and Glu239 together coordinate 1D-myo-inositol 2-(L-cysteinylamino)-2-deoxy-alpha-D-glucopyranoside. Acetyl-CoA is bound by residues Val243 to Val245 and Gln250 to Lys256. Tyr277 serves as a coordination point for 1D-myo-inositol 2-(L-cysteinylamino)-2-deoxy-alpha-D-glucopyranoside.

This sequence belongs to the acetyltransferase family. MshD subfamily. As to quaternary structure, monomer.

The enzyme catalyses 1D-myo-inositol 2-(L-cysteinylamino)-2-deoxy-alpha-D-glucopyranoside + acetyl-CoA = mycothiol + CoA + H(+). Its function is as follows. Catalyzes the transfer of acetyl from acetyl-CoA to desacetylmycothiol (Cys-GlcN-Ins) to form mycothiol. The chain is Mycothiol acetyltransferase from Streptomyces griseus subsp. griseus (strain JCM 4626 / CBS 651.72 / NBRC 13350 / KCC S-0626 / ISP 5235).